Here is a 116-residue protein sequence, read N- to C-terminus: Iron-sulfur cluster insertion protein ErpA (116 aa).

Iron-sulfur cluster-binding residues include Cys-44, Cys-108, and Cys-110.

Belongs to the HesB/IscA family. In terms of assembly, homodimer. It depends on iron-sulfur cluster as a cofactor.

Its function is as follows. Required for insertion of 4Fe-4S clusters for at least IspG. This Shewanella piezotolerans (strain WP3 / JCM 13877) protein is Iron-sulfur cluster insertion protein ErpA.